Here is a 526-residue protein sequence, read N- to C-terminus: Bifunctional purine biosynthesis protein PurH (526 aa).

The 147-residue stretch at 1-147 (MSSIKRALIS…KNWKHVAIVT (147 aa)) folds into the MGS-like domain.

Belongs to the PurH family.

It catalyses the reaction (6R)-10-formyltetrahydrofolate + 5-amino-1-(5-phospho-beta-D-ribosyl)imidazole-4-carboxamide = 5-formamido-1-(5-phospho-D-ribosyl)imidazole-4-carboxamide + (6S)-5,6,7,8-tetrahydrofolate. It carries out the reaction IMP + H2O = 5-formamido-1-(5-phospho-D-ribosyl)imidazole-4-carboxamide. It participates in purine metabolism; IMP biosynthesis via de novo pathway; 5-formamido-1-(5-phospho-D-ribosyl)imidazole-4-carboxamide from 5-amino-1-(5-phospho-D-ribosyl)imidazole-4-carboxamide (10-formyl THF route): step 1/1. The protein operates within purine metabolism; IMP biosynthesis via de novo pathway; IMP from 5-formamido-1-(5-phospho-D-ribosyl)imidazole-4-carboxamide: step 1/1. The polypeptide is Bifunctional purine biosynthesis protein PurH (Neisseria meningitidis serogroup B (strain ATCC BAA-335 / MC58)).